Reading from the N-terminus, the 1010-residue chain is Collagen, type I, alpha 1b (1010 aa).

Residues 1-24 (SSGPPQPGPMGPMGPRGPPGPPGS) are compositionally biased toward pro residues. The segment at 1–969 (SSGPPQPGPM…PDGTQKSPAR (969 aa)) is disordered. Residues 25–48 (SGPQGFTGPPGEPGEPGASGAMGS) show a composition bias toward low complexity. The span at 58–72 (NGDDGEPGKPGRPGE) shows a compositional bias: basic and acidic residues. Residues 73–82 (RGAAGPQGAR) are compositionally biased toward low complexity. Residues 145-159 (GGPPGPTGPAGPPGF) are compositionally biased toward pro residues. 2 stretches are compositionally biased toward gly residues: residues 160-179 (PGGAGVKGETGPAGGRGNEG) and 203-212 (GTDGGPGAKG). Low complexity-rich tracts occupy residues 213–268 (SPGA…PGPA) and 300–310 (ERGAPGARGFP). Positions 311-323 (GADGGAGGKGAPG) are enriched in gly residues. 2 stretches are compositionally biased toward low complexity: residues 324–343 (ERGATGESGSPGAPGAPGSK) and 405–448 (PAGA…APGE). 3 stretches are compositionally biased toward gly residues: residues 468-477 (GAPGLGGPTG), 486-495 (GAPGGLGAPG), and 519-528 (GGKGGDGAPG). 2 stretches are compositionally biased toward low complexity: residues 559 to 568 (VAGPTGPRGA) and 581 to 596 (AGFAGPPGADGQPGAK). Composition is skewed to gly residues over residues 609–618 (GAPGPGGPVG) and 633–642 (GARGGAGPPG). Low complexity-rich tracts occupy residues 643-662 (ATGFPGPAGRVGPSGPAGAA), 679-701 (ETGAAGRPGEAGAAGAPGPSGEK), and 796-805 (APGAVGPSGK). Over residues 834–847 (KGDRGEAGEAGDRG) the composition is skewed to basic and acidic residues. Residues 872–900 (PAGASGPAGPRGPAGSNGAAGKDGMNGLP) are compositionally biased toward low complexity. Residues 918-933 (AGPPGPPGPAGPPGPP) are compositionally biased toward pro residues. One can recognise a Fibrillar collagen NC1 domain in the interval 982 to 1010 (RLPLLDLAPMDVGAPDQEFGVEVGPVCFL).

This sequence belongs to the fibrillar collagen family.

Its subcellular location is the secreted. The protein resides in the extracellular space. The protein localises to the extracellular matrix. This chain is Collagen, type I, alpha 1b, found in Epinephelus marginatus (Dusky grouper).